The sequence spans 638 residues: Neuroendocrine convertase 2 (638 aa).

Positions 1–25 are cleaved as a signal peptide; it reads MKGGCVSQWKAAAGFLFCVMVFASA. Residues 26 to 109 constitute a propeptide that is removed on maturation; the sequence is ERPVFTNHFL…QQEGFDRKKR (84 aa). Residues 129–453 enclose the Peptidase S8 domain; it reads QWYLINTGQA…YGVLDAGAMV (325 aa). Residues aspartate 167 and histidine 208 each act as charge relay system in the active site. Disulfide bonds link cysteine 225-cysteine 376 and cysteine 317-cysteine 347. A glycan (N-linked (GlcNAc...) asparagine) is linked at asparagine 375. Serine 384 functions as the Charge relay system in the catalytic mechanism. The region spanning 461-597 is the P/Homo B domain; that stretch reads TVPERFHCVG…TLMLHGTQSA (137 aa). Cysteines 468 and 494 form a disulfide. N-linked (GlcNAc...) asparagine glycans are attached at residues asparagine 514 and asparagine 524.

It belongs to the peptidase S8 family. Furin subfamily.

Its subcellular location is the cytoplasmic vesicle. It localises to the secretory vesicle. The protein resides in the secreted. It carries out the reaction Release of protein hormones and neuropeptides from their precursors, generally by hydrolysis of -Lys-Arg-|- bonds.. Its function is as follows. Serine endopeptidase which is involved in the processing of hormone and other protein precursors at sites comprised of pairs of basic amino acid residues. Responsible for the release of glucagon from proglucagon in pancreatic A cells. This Pongo abelii (Sumatran orangutan) protein is Neuroendocrine convertase 2 (PCSK2).